The chain runs to 169 residues: uncharacterized protein (169 aa).

The next 2 membrane-spanning stretches (helical) occupy residues 10–30 (NVHM…FKLI) and 149–169 (IPLA…LLIP).

It localises to the membrane. This is an uncharacterized protein from Dictyostelium discoideum (Social amoeba).